Reading from the N-terminus, the 298-residue chain is Apolipoprotein E (298 aa).

A signal peptide spans 1-18; sequence MKVLWAALVVTLLAGCRA. 8 repeat units span residues 74-95, 96-117, 118-139, 140-161, 162-183, 184-204, 205-222, and 223-244. The 8 X 22 AA approximate tandem repeats stretch occupies residues 74-244; sequence LLIEDTMKEV…RLEEVREQME (171 aa). Position 137 is a methionine sulfoxide (methionine 137). The residue at position 141 (serine 141) is a Phosphoserine. The interval 152 to 162 is LDL and other lipoprotein receptors binding; sequence HPRKMKRRLQR. 156–159 serves as a coordination point for heparin; the sequence is MKRR. A heparin-binding site is contributed by 218-225; it reads GEQMRGRL. The segment at 260-272 is specificity for association with VLDL; that stretch reads RLKSWFEPMMEDM.

Belongs to the apolipoprotein A1/A4/E family. As to quaternary structure, homotetramer. May interact with ABCA1; functionally associated with ABCA1 in the biogenesis of HDLs. May interact with APP/A4 amyloid-beta peptide; the interaction is extremely stable in vitro but its physiological significance is unclear. May interact with MAPT. May interact with MAP2. In the cerebrospinal fluid, interacts with secreted SORL1. Interacts with PMEL; this allows the loading of PMEL luminal fragment on ILVs to induce fibril nucleation. APOE exists as multiple glycosylated and sialylated glycoforms within cells and in plasma. The extent of glycosylation and sialylation are tissue and context specific. Post-translationally, glycated in plasma VLDL. In terms of processing, phosphorylated by FAM20C in the extracellular medium.

It is found in the secreted. It localises to the extracellular space. The protein localises to the extracellular matrix. Its subcellular location is the extracellular vesicle. The protein resides in the endosome. It is found in the multivesicular body. In terms of biological role, APOE is an apolipoprotein, a protein associating with lipid particles, that mainly functions in lipoprotein-mediated lipid transport between organs via the plasma and interstitial fluids. APOE is a core component of plasma lipoproteins and is involved in their production, conversion and clearance. Apolipoproteins are amphipathic molecules that interact both with lipids of the lipoprotein particle core and the aqueous environment of the plasma. As such, APOE associates with chylomicrons, chylomicron remnants, very low density lipoproteins (VLDL) and intermediate density lipoproteins (IDL) but shows a preferential binding to high-density lipoproteins (HDL). It also binds a wide range of cellular receptors including the LDL receptor/LDLR and the very low-density lipoprotein receptor/VLDLR that mediate the cellular uptake of the APOE-containing lipoprotein particles. Finally, APOE also has a heparin-binding activity and binds heparan-sulfate proteoglycans on the surface of cells, a property that supports the capture and the receptor-mediated uptake of APOE-containing lipoproteins by cells. This chain is Apolipoprotein E (APOE), found in Cavia porcellus (Guinea pig).